Reading from the N-terminus, the 612-residue chain is Putative pentatricopeptide repeat-containing protein At5g40405 (612 aa).

10 PPR repeats span residues 70–104, 107–141, 142–172, 173–203, 204–238, 239–273, 274–304, 305–339, 340–375, and 376–410; these read TLFA…GNDL, DNYT…GFDN, DPHV…IPCP, DFVC…MPER, DPIA…GVKV, NGVA…KIKI, TVRL…MEEK, NVYT…GVTP, NAVT…GIEP, and QLEH…PHAA. Residues 411–486 are type E motif; the sequence is VWSSLLHASR…QPGCSVMEVN (76 aa). The interval 487–517 is type E(+) motif; it reads GEVHEFFVGDKSHPKYTQIDAVWKDISRRLR. Residues 518–612 form a type DYW motif region; that stretch reads LAGYKADTTP…DGHCSCNGFW (95 aa).

This sequence belongs to the PPR family. PCMP-H subfamily.

The sequence is that of Putative pentatricopeptide repeat-containing protein At5g40405 (PCMP-H14) from Arabidopsis thaliana (Mouse-ear cress).